The following is a 104-amino-acid chain: Colipase-like protein 2 (104 aa).

Residues 1 to 19 (MAFTQALVTVLAFLVGTLP) form the signal peptide. 5 disulfides stabilise this stretch: Cys-38–Cys-49, Cys-44–Cys-60, Cys-48–Cys-82, Cys-70–Cys-90, and Cys-84–Cys-101.

Belongs to the colipase family.

It is found in the secreted. This is Colipase-like protein 2 (Clpsl2) from Rattus norvegicus (Rat).